Here is a 337-residue protein sequence, read N- to C-terminus: Basic membrane protein A1 (337 aa).

Residues 1 to 17 (MNKLLLLILFECIIFLS) form the signal peptide. Cysteine 18 carries N-palmitoyl cysteine lipidation. A lipid anchor (S-diacylglycerol cysteine) is attached at cysteine 18.

Belongs to the BMP lipoprotein family. Monomer.

It localises to the cell inner membrane. Its function is as follows. Immunogenic protein. May be part of an ABC-type nucleoside uptake system involved in the purine salvage pathway. The polypeptide is Basic membrane protein A1 (bmpA1) (Borrelia garinii subsp. bavariensis (strain ATCC BAA-2496 / DSM 23469 / PBi) (Borreliella bavariensis)).